A 410-amino-acid polypeptide reads, in one-letter code: Arginine biosynthesis bifunctional protein ArgJ (410 aa).

Positions 158, 184, 195, 282, 405, and 410 each coordinate substrate. T195 acts as the Nucleophile in catalysis.

Belongs to the ArgJ family. As to quaternary structure, heterotetramer of two alpha and two beta chains.

It localises to the cytoplasm. The catalysed reaction is N(2)-acetyl-L-ornithine + L-glutamate = N-acetyl-L-glutamate + L-ornithine. It catalyses the reaction L-glutamate + acetyl-CoA = N-acetyl-L-glutamate + CoA + H(+). It functions in the pathway amino-acid biosynthesis; L-arginine biosynthesis; L-ornithine and N-acetyl-L-glutamate from L-glutamate and N(2)-acetyl-L-ornithine (cyclic): step 1/1. The protein operates within amino-acid biosynthesis; L-arginine biosynthesis; N(2)-acetyl-L-ornithine from L-glutamate: step 1/4. Functionally, catalyzes two activities which are involved in the cyclic version of arginine biosynthesis: the synthesis of N-acetylglutamate from glutamate and acetyl-CoA as the acetyl donor, and of ornithine by transacetylation between N(2)-acetylornithine and glutamate. This is Arginine biosynthesis bifunctional protein ArgJ from Rhodopirellula baltica (strain DSM 10527 / NCIMB 13988 / SH1).